We begin with the raw amino-acid sequence, 308 residues long: Acetylglutamate kinase (308 aa).

Substrate-binding positions include 64–65 (GG), Arg-86, and Asn-192.

This sequence belongs to the acetylglutamate kinase family. ArgB subfamily.

It is found in the cytoplasm. The enzyme catalyses N-acetyl-L-glutamate + ATP = N-acetyl-L-glutamyl 5-phosphate + ADP. It functions in the pathway amino-acid biosynthesis; L-arginine biosynthesis; N(2)-acetyl-L-ornithine from L-glutamate: step 2/4. Catalyzes the ATP-dependent phosphorylation of N-acetyl-L-glutamate. The protein is Acetylglutamate kinase of Myxococcus xanthus (strain DK1622).